Reading from the N-terminus, the 244-residue chain is tRNA pseudouridine synthase A (244 aa).

Asp-55 (nucleophile) is an active-site residue. Residue Tyr-113 coordinates substrate.

This sequence belongs to the tRNA pseudouridine synthase TruA family. Homodimer.

The catalysed reaction is uridine(38/39/40) in tRNA = pseudouridine(38/39/40) in tRNA. Its function is as follows. Formation of pseudouridine at positions 38, 39 and 40 in the anticodon stem and loop of transfer RNAs. This Phytoplasma mali (strain AT) protein is tRNA pseudouridine synthase A.